We begin with the raw amino-acid sequence, 327 residues long: Methionyl-tRNA formyltransferase (327 aa).

121 to 124 lines the (6S)-5,6,7,8-tetrahydrofolate pocket; it reads SLLP.

It belongs to the Fmt family.

The catalysed reaction is L-methionyl-tRNA(fMet) + (6R)-10-formyltetrahydrofolate = N-formyl-L-methionyl-tRNA(fMet) + (6S)-5,6,7,8-tetrahydrofolate + H(+). Attaches a formyl group to the free amino group of methionyl-tRNA(fMet). The formyl group appears to play a dual role in the initiator identity of N-formylmethionyl-tRNA by promoting its recognition by IF2 and preventing the misappropriation of this tRNA by the elongation apparatus. The polypeptide is Methionyl-tRNA formyltransferase (Burkholderia ambifaria (strain MC40-6)).